The chain runs to 429 residues: 46 kDa membrane protein (429 aa).

The next 9 membrane-spanning stretches (helical) occupy residues 26–46 (AALT…EDVF), 51–71 (TGID…VSVL), 99–119 (LVLV…VLLI), 173–193 (FLIH…ALLP), 224–244 (LLIK…AHPV), 279–299 (TLLF…TDVV), 315–335 (LLTV…IDNI), 360–380 (ILWW…AVGA), and 407–427 (IAVT…RYLV).

Belongs to the CitM (TC 2.A.11) transporter family.

The protein resides in the cell membrane. This is 46 kDa membrane protein (ag45) from Mycobacterium leprae (strain TN).